A 476-amino-acid polypeptide reads, in one-letter code: Bifunctional protein GlmU (476 aa).

Positions 1–235 (MTALDIIIMA…ALQVAGVNSP (235 aa)) are pyrophosphorylase. UDP-N-acetyl-alpha-D-glucosamine contacts are provided by residues Lys23, Gln81, 86 to 87 (GT), 108 to 110 (SGD), Gly145, Glu160, and Asn233. Residue Asp110 participates in Mg(2+) binding. Asn233 provides a ligand contact to Mg(2+). Residues 236–256 (AQLAELERAHQRAQAAALMEQ) form a linker region. The segment at 257–476 (GVRLADPARF…WKRPAKQAKG (220 aa)) is N-acetyltransferase. Positions 351 and 369 each coordinate UDP-N-acetyl-alpha-D-glucosamine. His381 functions as the Proton acceptor in the catalytic mechanism. The UDP-N-acetyl-alpha-D-glucosamine site is built by Tyr384 and Asn395. Residues Ala398, 404–405 (NY), Ser423, Gly441, and Arg458 contribute to the acetyl-CoA site.

In the N-terminal section; belongs to the N-acetylglucosamine-1-phosphate uridyltransferase family. The protein in the C-terminal section; belongs to the transferase hexapeptide repeat family. Homotrimer. Requires Mg(2+) as cofactor.

The protein resides in the cytoplasm. The catalysed reaction is alpha-D-glucosamine 1-phosphate + acetyl-CoA = N-acetyl-alpha-D-glucosamine 1-phosphate + CoA + H(+). The enzyme catalyses N-acetyl-alpha-D-glucosamine 1-phosphate + UTP + H(+) = UDP-N-acetyl-alpha-D-glucosamine + diphosphate. The protein operates within nucleotide-sugar biosynthesis; UDP-N-acetyl-alpha-D-glucosamine biosynthesis; N-acetyl-alpha-D-glucosamine 1-phosphate from alpha-D-glucosamine 6-phosphate (route II): step 2/2. It functions in the pathway nucleotide-sugar biosynthesis; UDP-N-acetyl-alpha-D-glucosamine biosynthesis; UDP-N-acetyl-alpha-D-glucosamine from N-acetyl-alpha-D-glucosamine 1-phosphate: step 1/1. Its pathway is bacterial outer membrane biogenesis; LPS lipid A biosynthesis. In terms of biological role, catalyzes the last two sequential reactions in the de novo biosynthetic pathway for UDP-N-acetylglucosamine (UDP-GlcNAc). The C-terminal domain catalyzes the transfer of acetyl group from acetyl coenzyme A to glucosamine-1-phosphate (GlcN-1-P) to produce N-acetylglucosamine-1-phosphate (GlcNAc-1-P), which is converted into UDP-GlcNAc by the transfer of uridine 5-monophosphate (from uridine 5-triphosphate), a reaction catalyzed by the N-terminal domain. The chain is Bifunctional protein GlmU from Acidovorax ebreus (strain TPSY) (Diaphorobacter sp. (strain TPSY)).